The primary structure comprises 72 residues: Translation initiation factor IF-1 (72 aa).

The 72-residue stretch at Met1–Lys72 folds into the S1-like domain.

Belongs to the IF-1 family. In terms of assembly, component of the 30S ribosomal translation pre-initiation complex which assembles on the 30S ribosome in the order IF-2 and IF-3, IF-1 and N-formylmethionyl-tRNA(fMet); mRNA recruitment can occur at any time during PIC assembly.

The protein resides in the cytoplasm. Functionally, one of the essential components for the initiation of protein synthesis. Stabilizes the binding of IF-2 and IF-3 on the 30S subunit to which N-formylmethionyl-tRNA(fMet) subsequently binds. Helps modulate mRNA selection, yielding the 30S pre-initiation complex (PIC). Upon addition of the 50S ribosomal subunit IF-1, IF-2 and IF-3 are released leaving the mature 70S translation initiation complex. This Methylibium petroleiphilum (strain ATCC BAA-1232 / LMG 22953 / PM1) protein is Translation initiation factor IF-1.